Consider the following 155-residue polypeptide: Small ribosomal subunit protein uS7 (155 aa).

It belongs to the universal ribosomal protein uS7 family. As to quaternary structure, part of the 30S ribosomal subunit. Contacts proteins S9 and S11.

In terms of biological role, one of the primary rRNA binding proteins, it binds directly to 16S rRNA where it nucleates assembly of the head domain of the 30S subunit. Is located at the subunit interface close to the decoding center, probably blocks exit of the E-site tRNA. This chain is Small ribosomal subunit protein uS7, found in Ureaplasma parvum serovar 3 (strain ATCC 27815 / 27 / NCTC 11736).